A 215-amino-acid chain; its full sequence is Eukaryotic translation initiation factor 4E-1 (215 aa).

The tract at residues M1–A32 is disordered. Residues E16–D27 show a composition bias toward acidic residues. EIF4G-binding regions lie at residues H40 to E43 and F50 to H86. Residues R58–G63, K90, and W108–E109 contribute to the mRNA site. Residues C113 and C151 are joined by a disulfide bond. An EIF4G-binding region spans residues H134 to Q143. Residues R158–R163 and K203–K207 each bind mRNA.

It belongs to the eukaryotic initiation factor 4E family. As to quaternary structure, EIF4F is a multi-subunit complex, the composition of which varies with external and internal environmental conditions. It is composed of at least EIF4A, EIF4E and EIF4G. EIF4E is also known to interact with other partners. In higher plants two isoforms of EIF4F have been identified, named isoform EIF4F and isoform EIF(iso)4F. Isoform EIF4F has subunits p220 and p26, whereas isoform EIF(iso)4F has subunits p82 and p28. In terms of processing, according to the redox status, the Cys-113-Cys-151 disulfide bridge may have a role in regulating protein function by affecting its ability to bind capped mRNA.

The protein resides in the nucleus. It localises to the cytoplasm. Its function is as follows. Component of the protein complex eIF4F, which is involved in the recognition of the mRNA cap, ATP-dependent unwinding of 5'-terminal secondary structure and recruitment of mRNA to the ribosome. Recognizes and binds the 7-methylguanosine-containing mRNA cap during an early step in the initiation of protein synthesis and facilitates ribosome binding by inducing the unwinding of the mRNAs secondary structures. The protein is Eukaryotic translation initiation factor 4E-1 of Triticum aestivum (Wheat).